Reading from the N-terminus, the 311-residue chain is Phosphopantothenate--cysteine ligase (311 aa).

A2 is modified (N-acetylalanine).

Belongs to the PPC synthetase family. In terms of assembly, homodimer.

It carries out the reaction (R)-4'-phosphopantothenate + L-cysteine + ATP = N-[(R)-4-phosphopantothenoyl]-L-cysteine + AMP + diphosphate + H(+). The catalysed reaction is (R)-4'-phosphopantothenate + L-cysteine + CTP = N-[(R)-4-phosphopantothenoyl]-L-cysteine + CMP + diphosphate + H(+). Its pathway is cofactor biosynthesis; coenzyme A biosynthesis; CoA from (R)-pantothenate: step 2/5. Catalyzes the second step in the biosynthesis of coenzyme A from vitamin B5, where cysteine is conjugated to 4'-phosphopantothenate to form 4-phosphopantothenoylcysteine. Has a preference for ATP over CTP as a cosubstrate. This Mus musculus (Mouse) protein is Phosphopantothenate--cysteine ligase (Ppcs).